We begin with the raw amino-acid sequence, 77 residues long: MSVEQRVKEIIADQLGVEMEKITPEARFVDDLGADSLDVVELIMAFEEEFGVEIPDEDAEKIATVKDVLDYIKSKQG.

One can recognise a Carrier domain in the interval 1–76; the sequence is MSVEQRVKEI…DVLDYIKSKQ (76 aa). The residue at position 36 (Ser36) is an O-(pantetheine 4'-phosphoryl)serine.

Belongs to the acyl carrier protein (ACP) family. In terms of processing, 4'-phosphopantetheine is transferred from CoA to a specific serine of apo-ACP by AcpS. This modification is essential for activity because fatty acids are bound in thioester linkage to the sulfhydryl of the prosthetic group.

It localises to the cytoplasm. Its pathway is lipid metabolism; fatty acid biosynthesis. Carrier of the growing fatty acid chain in fatty acid biosynthesis. The polypeptide is Acyl carrier protein (Sulfurihydrogenibium sp. (strain YO3AOP1)).